The chain runs to 179 residues: Large ribosomal subunit protein uL5 (179 aa).

Belongs to the universal ribosomal protein uL5 family. As to quaternary structure, part of the 50S ribosomal subunit; part of the 5S rRNA/L5/L18/L25 subcomplex. Contacts the 5S rRNA and the P site tRNA. Forms a bridge to the 30S subunit in the 70S ribosome.

Its function is as follows. This is one of the proteins that bind and probably mediate the attachment of the 5S RNA into the large ribosomal subunit, where it forms part of the central protuberance. In the 70S ribosome it contacts protein S13 of the 30S subunit (bridge B1b), connecting the 2 subunits; this bridge is implicated in subunit movement. Contacts the P site tRNA; the 5S rRNA and some of its associated proteins might help stabilize positioning of ribosome-bound tRNAs. This Halalkalibacterium halodurans (strain ATCC BAA-125 / DSM 18197 / FERM 7344 / JCM 9153 / C-125) (Bacillus halodurans) protein is Large ribosomal subunit protein uL5.